The sequence spans 139 residues: Cytochrome c-type biogenesis protein CcmE (139 aa).

The Cytoplasmic portion of the chain corresponds to 1-7 (MTKRQNR). The chain crosses the membrane as a helical; Signal-anchor for type II membrane protein span at residues 8–28 (MTLVALLVIGVSLTGYLGLKA). Over 29 to 139 (FNENLLYFFS…ADALEKAKNK (111 aa)) the chain is Periplasmic. Heme-binding residues include His120 and Tyr124.

This sequence belongs to the CcmE/CycJ family.

It localises to the cell inner membrane. Functionally, heme chaperone required for the biogenesis of c-type cytochromes. Transiently binds heme delivered by CcmC and transfers the heme to apo-cytochromes in a process facilitated by CcmF and CcmH. The sequence is that of Cytochrome c-type biogenesis protein CcmE from Ruthia magnifica subsp. Calyptogena magnifica.